The chain runs to 512 residues: Sporulation-regulated protein 3 (512 aa).

The interval 31–68 (RQSSQGQYAVDSHPPKSPELKHRRQRSSSFVNGKCRNR) is disordered. One can recognise a Septin-type G domain in the interval 106–365 (NGIDFTLMVA…EKCRSEMLRT (260 aa)). The interval 116–123 (GQSGLGKT) is G1 motif. GTP contacts are provided by residues 116–123 (GQSGLGKT), G168, 247–255 (KSDLLTKEE), and R315. Positions 165–168 (DTPG) are G3 motif. The tract at residues 246–249 (AKSD) is G4 motif. Coiled-coil stretches lie at residues 376 to 406 (TKSV…LKNY) and 451 to 496 (RDWK…KSSN).

It belongs to the TRAFAC class TrmE-Era-EngA-EngB-Septin-like GTPase superfamily. Septin GTPase family. In terms of assembly, interacts with other septin proteins such as SPR28 to form a ring at the bud neck.

It is found in the prospore membrane. It localises to the bud neck. In terms of biological role, septins are GTPases involved in cytokinesis that assemble into filaments and form a ring at the cleavage site. May act by recruiting MYO1 and HOF1, a protein involved in septation, to the site of cleavage. Septins are also involved in cell morphogenesis, bud site selection, chitin deposition, cell cycle regulation, cell compartmentalization and spore wall formation. The chain is Sporulation-regulated protein 3 (SPR3) from Saccharomyces cerevisiae (strain ATCC 204508 / S288c) (Baker's yeast).